Reading from the N-terminus, the 407-residue chain is uncharacterized protein (407 aa).

Disordered regions lie at residues 1–62 and 350–379; these read MTGR…NGDP and SVTP…KPSS. A compositionally biased stretch (basic and acidic residues) spans 17–30; sequence PVEKMPRFQREHGA.

This is an uncharacterized protein from Ictaluridae (bullhead catfishes).